The following is a 347-amino-acid chain: Protein RecA (347 aa).

67 to 74 (GPESSGKT) serves as a coordination point for ATP. Positions 326 to 347 (DKLLPGRAPSSEAQGTESGQEA) are disordered. A compositionally biased stretch (polar residues) spans 336 to 347 (SEAQGTESGQEA).

The protein belongs to the RecA family.

Its subcellular location is the cytoplasm. Functionally, can catalyze the hydrolysis of ATP in the presence of single-stranded DNA, the ATP-dependent uptake of single-stranded DNA by duplex DNA, and the ATP-dependent hybridization of homologous single-stranded DNAs. It interacts with LexA causing its activation and leading to its autocatalytic cleavage. This Alkalilimnicola ehrlichii (strain ATCC BAA-1101 / DSM 17681 / MLHE-1) protein is Protein RecA.